The chain runs to 607 residues: UvrABC system protein C (607 aa).

Residues 15–94 (ENPGVYLMKN…IKRHRPYFNV (80 aa)) form the GIY-YIG domain. Positions 204 to 239 (DQVLKLLIRLMNEASARLDYETAALRRDQIASIKEV) constitute a UVR domain.

This sequence belongs to the UvrC family. Interacts with UvrB in an incision complex.

Its subcellular location is the cytoplasm. The UvrABC repair system catalyzes the recognition and processing of DNA lesions. UvrC both incises the 5' and 3' sides of the lesion. The N-terminal half is responsible for the 3' incision and the C-terminal half is responsible for the 5' incision. The polypeptide is UvrABC system protein C (Dehalococcoides mccartyi (strain ATCC BAA-2100 / JCM 16839 / KCTC 5957 / BAV1)).